Here is a 179-residue protein sequence, read N- to C-terminus: Cytochrome b6-f complex iron-sulfur subunit (179 aa).

The helical transmembrane segment at 20 to 42 (LLTFGTITGVAAGALYPIVKYFI) threads the bilayer. The Rieske domain occupies 60-161 (GNDVIVSQFL…ANVTDNDKVV (102 aa)). 4 residues coordinate [2Fe-2S] cluster: cysteine 107, histidine 109, cysteine 125, and histidine 128. Cysteine 112 and cysteine 127 are oxidised to a cystine.

This sequence belongs to the Rieske iron-sulfur protein family. As to quaternary structure, the 4 large subunits of the cytochrome b6-f complex are cytochrome b6, subunit IV (17 kDa polypeptide, PetD), cytochrome f and the Rieske protein, while the 4 small subunits are PetG, PetL, PetM and PetN. The complex functions as a dimer. [2Fe-2S] cluster is required as a cofactor.

The protein localises to the cellular thylakoid membrane. It catalyses the reaction 2 oxidized [plastocyanin] + a plastoquinol + 2 H(+)(in) = 2 reduced [plastocyanin] + a plastoquinone + 4 H(+)(out). Its function is as follows. Component of the cytochrome b6-f complex, which mediates electron transfer between photosystem II (PSII) and photosystem I (PSI), cyclic electron flow around PSI, and state transitions. The chain is Cytochrome b6-f complex iron-sulfur subunit from Microcystis aeruginosa (strain NIES-843 / IAM M-2473).